Here is a 200-residue protein sequence, read N- to C-terminus: Recombination protein RecR (200 aa).

A C4-type zinc finger spans residues 58–73 (CEVCHNLAEEGLCAIC). A Toprim domain is found at 81-176 (GLICVVEEPV…DISRLAYGMP (96 aa)).

It belongs to the RecR family.

In terms of biological role, may play a role in DNA repair. It seems to be involved in an RecBC-independent recombinational process of DNA repair. It may act with RecF and RecO. In Magnetococcus marinus (strain ATCC BAA-1437 / JCM 17883 / MC-1), this protein is Recombination protein RecR.